The sequence spans 163 residues: Seed allergenic protein RAG1 (163 aa).

Positions 1–27 (MASNKVVFSVLLLVVLSVLAAAMATMA) are cleaved as a signal peptide. 5 disulfide bridges follow: Cys-39-Cys-90, Cys-53-Cys-78, Cys-61-Cys-122, Cys-79-Cys-138, and Cys-92-Cys-150.

It belongs to the cereal trypsin/alpha-amylase inhibitor family. Five disulfide bonds are present.

The protein localises to the secreted. Seed storage protein. The polypeptide is Seed allergenic protein RAG1 (RAG1) (Oryza sativa subsp. japonica (Rice)).